We begin with the raw amino-acid sequence, 207 residues long: Peptidyl-tRNA hydrolase (207 aa).

TRNA is bound at residue Y14. H19 acts as the Proton acceptor in catalysis. F68, N70, and N116 together coordinate tRNA.

This sequence belongs to the PTH family. As to quaternary structure, monomer.

Its subcellular location is the cytoplasm. The catalysed reaction is an N-acyl-L-alpha-aminoacyl-tRNA + H2O = an N-acyl-L-amino acid + a tRNA + H(+). In terms of biological role, hydrolyzes ribosome-free peptidyl-tRNAs (with 1 or more amino acids incorporated), which drop off the ribosome during protein synthesis, or as a result of ribosome stalling. Functionally, catalyzes the release of premature peptidyl moieties from peptidyl-tRNA molecules trapped in stalled 50S ribosomal subunits, and thus maintains levels of free tRNAs and 50S ribosomes. The sequence is that of Peptidyl-tRNA hydrolase from Hyphomonas neptunium (strain ATCC 15444).